The following is a 389-amino-acid chain: Chaperone protein DnaJ (389 aa).

One can recognise a J domain in the interval 5-79; sequence KRDYYEVLGI…RKLYDQFGHE (75 aa). Residues 151 to 234 form a CR-type zinc finger; that stretch reads GCNKTIKYER…CRSNKYTVTN (84 aa). Residues Cys164, Cys167, Cys182, Cys185, Cys208, Cys211, Cys222, and Cys225 each contribute to the Zn(2+) site. CXXCXGXG motif repeat units follow at residues 164–171, 182–189, 208–215, and 222–229; these read CHSCNGFG, CKDCNGNG, CSTCNGQG, and CKTCRSNK.

This sequence belongs to the DnaJ family. Homodimer. Zn(2+) serves as cofactor.

The protein localises to the cytoplasm. Functionally, participates actively in the response to hyperosmotic and heat shock by preventing the aggregation of stress-denatured proteins and by disaggregating proteins, also in an autonomous, DnaK-independent fashion. Unfolded proteins bind initially to DnaJ; upon interaction with the DnaJ-bound protein, DnaK hydrolyzes its bound ATP, resulting in the formation of a stable complex. GrpE releases ADP from DnaK; ATP binding to DnaK triggers the release of the substrate protein, thus completing the reaction cycle. Several rounds of ATP-dependent interactions between DnaJ, DnaK and GrpE are required for fully efficient folding. Also involved, together with DnaK and GrpE, in the DNA replication of plasmids through activation of initiation proteins. The chain is Chaperone protein DnaJ from Mycoplasma genitalium (strain ATCC 33530 / DSM 19775 / NCTC 10195 / G37) (Mycoplasmoides genitalium).